The chain runs to 71 residues: Small, acid-soluble spore protein I (71 aa).

Belongs to the SspI family.

Its subcellular location is the spore core. The chain is Small, acid-soluble spore protein I from Bacillus velezensis (strain DSM 23117 / BGSC 10A6 / LMG 26770 / FZB42) (Bacillus amyloliquefaciens subsp. plantarum).